The primary structure comprises 158 residues: Lipoprotein signal peptidase (158 aa).

4 helical membrane-spanning segments follow: residues 7 to 27 (LFWIAAFIAFFVDQLTKYWVV), 38 to 58 (ILPGIFHFTYVTNTGAAFSLF), 67 to 87 (WLSLGVSLLLIGLALLGPVLE), and 95 to 115 (GLILGGAMGNGIDRFALGYVV). Active-site residues include D116 and D132. Residues 125 to 145 (FAVFNMADSFISIGIVCLLLA) form a helical membrane-spanning segment.

It belongs to the peptidase A8 family.

Its subcellular location is the cell inner membrane. The enzyme catalyses Release of signal peptides from bacterial membrane prolipoproteins. Hydrolyzes -Xaa-Yaa-Zaa-|-(S,diacylglyceryl)Cys-, in which Xaa is hydrophobic (preferably Leu), and Yaa (Ala or Ser) and Zaa (Gly or Ala) have small, neutral side chains.. It participates in protein modification; lipoprotein biosynthesis (signal peptide cleavage). Its function is as follows. This protein specifically catalyzes the removal of signal peptides from prolipoproteins. The protein is Lipoprotein signal peptidase of Trichormus variabilis (strain ATCC 29413 / PCC 7937) (Anabaena variabilis).